A 142-amino-acid polypeptide reads, in one-letter code: Large ribosomal subunit protein uL13 (142 aa).

The protein belongs to the universal ribosomal protein uL13 family. In terms of assembly, part of the 50S ribosomal subunit.

This protein is one of the early assembly proteins of the 50S ribosomal subunit, although it is not seen to bind rRNA by itself. It is important during the early stages of 50S assembly. The protein is Large ribosomal subunit protein uL13 of Buchnera aphidicola subsp. Acyrthosiphon pisum (strain 5A).